The following is an 80-amino-acid chain: MAAKKPENMAFEAALDELDSIVNELESGDIALEDALKKFERGIMLARTSQKKLTQAEQRVEILLQADDEAPLTEFNENNE.

Belongs to the XseB family. Heterooligomer composed of large and small subunits.

It is found in the cytoplasm. The catalysed reaction is Exonucleolytic cleavage in either 5'- to 3'- or 3'- to 5'-direction to yield nucleoside 5'-phosphates.. Bidirectionally degrades single-stranded DNA into large acid-insoluble oligonucleotides, which are then degraded further into small acid-soluble oligonucleotides. In Photobacterium profundum (strain SS9), this protein is Exodeoxyribonuclease 7 small subunit.